The primary structure comprises 453 residues: Cytochrome P450 monooxygenase PC-20 (453 aa).

A run of 2 helical transmembrane segments spans residues 5 to 25 (LGPF…LCVI) and 49 to 69 (LGVV…LFCV). Residue cysteine 387 coordinates heme.

It belongs to the cytochrome P450 family. Requires heme as cofactor.

It is found in the membrane. The protein operates within secondary metabolite biosynthesis. Functionally, cytochrome P450 monooxygenase; part of the gene cluster that mediates the biosynthesis of the indole diterpenes penitrems. The geranylgeranyl diphosphate (GGPP) synthase penG catalyzes the first step in penitrem biosynthesis via conversion of farnesyl pyrophosphate and isopentyl pyrophosphate into geranylgeranyl pyrophosphate (GGPP). Condensation of indole-3-glycerol phosphate with GGPP by the prenyl transferase penC then forms 3-geranylgeranylindole (3-GGI). Epoxidation by the FAD-dependent monooxygenase penM leads to a epoxidized-GGI that is substrate of the terpene cyclase penB for cyclization to yield paspaline. Paspaline is subsequently converted to 13-desoxypaxilline by the cytochrome P450 monooxygenase penP, the latter being then converted to paxilline by the cytochrome P450 monooxygenase penQ. Paxilline is converted to beta-paxitriol via C-10 ketoreduction by the short-chain dehydrogenase PC-15 which can be monoprenylated at the C-20 by the indole diterpene prenyltransferase penD. A two-step elimination (acetylation and elimination) process performed by the O-acetyltransferase PC-16 and the P.simplicissimum ptmI-ortholog not yet identified in P.crustosum, leads to the production of the prenylated form of penijanthine. The FAD-linked oxidoreductase ptmO then converts the prenylated form of penijanthine into PC-M5 which is in turn transformed into PC-M4 by the aromatic dimethylallyltransferase PC-22. A series of oxidation steps involving 4 cytochrome P450 monooxygenases (PC-21, PC-05, PC-23, PC-20) and a FAD-dependent monooxygenase (PC-14) are required for the transformation of PC-M4 to penitrems A and E. Synthesis of these final products is proposed to proceed via penitrems D and C (PC-21, PC-05, PC-14) and penitrems B and F (PC-21, PC-05, PC-14, PC-23). In Penicillium crustosum (Blue mold fungus), this protein is Cytochrome P450 monooxygenase PC-20.